A 271-amino-acid polypeptide reads, in one-letter code: Phosphate import ATP-binding protein PstB (271 aa).

The region spanning 24 to 266 (MIGQDVSVYY…PDDPRTQDYI (243 aa)) is the ABC transporter domain. Residue 56–63 (GPSGCGKS) coordinates ATP.

The protein belongs to the ABC transporter superfamily. Phosphate importer (TC 3.A.1.7) family. As to quaternary structure, the complex is composed of two ATP-binding proteins (PstB), two transmembrane proteins (PstC and PstA) and a solute-binding protein (PstS).

The protein localises to the cell inner membrane. The enzyme catalyses phosphate(out) + ATP + H2O = ADP + 2 phosphate(in) + H(+). Its function is as follows. Part of the ABC transporter complex PstSACB involved in phosphate import. Responsible for energy coupling to the transport system. The sequence is that of Phosphate import ATP-binding protein PstB from Rhizobium etli (strain ATCC 51251 / DSM 11541 / JCM 21823 / NBRC 15573 / CFN 42).